The chain runs to 1368 residues: DNA-directed RNA polymerase subunit beta (1368 aa).

This sequence belongs to the RNA polymerase beta chain family. In terms of assembly, the RNAP catalytic core consists of 2 alpha, 1 beta, 1 beta' and 1 omega subunit. When a sigma factor is associated with the core the holoenzyme is formed, which can initiate transcription.

The catalysed reaction is RNA(n) + a ribonucleoside 5'-triphosphate = RNA(n+1) + diphosphate. In terms of biological role, DNA-dependent RNA polymerase catalyzes the transcription of DNA into RNA using the four ribonucleoside triphosphates as substrates. The polypeptide is DNA-directed RNA polymerase subunit beta (Desulfosudis oleivorans (strain DSM 6200 / JCM 39069 / Hxd3) (Desulfococcus oleovorans)).